A 620-amino-acid polypeptide reads, in one-letter code: Hemagglutinin glycoprotein (620 aa).

The Intravirion segment spans residues 1-37 (MSPQRDRTNAFYKDNPHPKGSRIVINREHLMIDRPYV). The tract at residues 1 to 154 (MSPQRDRTNA…RIKLDYDQYC (154 aa)) is stalk. A helical; Signal-anchor for type II membrane protein transmembrane segment spans residues 38 to 58 (LLAILFVMFLSLIGLLAIAGI). At 59 to 620 (RLHQAAIHTA…EDGTNRRQSC (562 aa)) the chain is on the virion surface side. N-linked (GlcNAc...) asparagine; by host glycans are attached at residues asparagine 168, asparagine 187, asparagine 200, asparagine 215, and asparagine 238. 5 disulfide bridges follow: cysteine 188–cysteine 606, cysteine 287–cysteine 300, cysteine 381–cysteine 494, cysteine 386–cysteine 394, and cysteine 570–cysteine 579. Positions 458-543 (PMKNLALGVI…VEHAVVYYVY (86 aa)) are interaction with host NECTIN4 receptor.

Belongs to the paramyxoviruses hemagglutinin-neuraminidase family. Non-sialidase subfamily. As to quaternary structure, homodimer; disulfide-linked. Further forms homotetramer (dimer of dimers). Interacts (via C-terminus) with human NECTIN4 (via N-terminus); this interaction allows attachment to the respiratory epithelium and viral entry. Interacts (via C-terminus) with human SLAMF1/CD150 (via N-terminus); this interaction allows attachment and viral entry into the CD150-expressing immune cells.

The protein localises to the virion membrane. It localises to the host cell membrane. Functionally, attaches the virus to the human SLAMF1/CD150 receptor for entry into host dendritic cells, macrophages, activated memory T cells and naive or memory B cells, thereby explaining the long immunosuppression that follows infection. In the respiratory airways, binds to the NECTIN4 receptor for entry into the host cell. Binding of H protein to the receptor induces a conformational change that allows the F protein to trigger virion/cell membranes fusion. The sequence is that of Hemagglutinin glycoprotein (H) from Homo sapiens (Human).